We begin with the raw amino-acid sequence, 290 residues long: 4-hydroxy-tetrahydrodipicolinate synthase (290 aa).

Thr44 provides a ligand contact to pyruvate. Tyr132 (proton donor/acceptor) is an active-site residue. The active-site Schiff-base intermediate with substrate is Lys160. A pyruvate-binding site is contributed by Ile202.

The protein belongs to the DapA family. In terms of assembly, homotetramer; dimer of dimers.

The protein localises to the cytoplasm. The enzyme catalyses L-aspartate 4-semialdehyde + pyruvate = (2S,4S)-4-hydroxy-2,3,4,5-tetrahydrodipicolinate + H2O + H(+). It participates in amino-acid biosynthesis; L-lysine biosynthesis via DAP pathway; (S)-tetrahydrodipicolinate from L-aspartate: step 3/4. Functionally, catalyzes the condensation of (S)-aspartate-beta-semialdehyde [(S)-ASA] and pyruvate to 4-hydroxy-tetrahydrodipicolinate (HTPA). This is 4-hydroxy-tetrahydrodipicolinate synthase from Geobacter metallireducens (strain ATCC 53774 / DSM 7210 / GS-15).